A 730-amino-acid chain; its full sequence is Guanylate cyclase soluble subunit alpha-2 (730 aa).

The segment at 1-53 is disordered; it reads MSRRKISSESFSSLGSDYLETSPEEEGECPLSKLCWNGSRSPPGPPGSRAAAM. Positions 519 to 646 constitute a Guanylate cyclase domain; it reads TMLFSDIVGF…NNVTLASKFE (128 aa).

The protein belongs to the adenylyl cyclase class-4/guanylyl cyclase family. In terms of assembly, heterodimer of an alpha and a beta chain.

The protein resides in the cytoplasm. The catalysed reaction is GTP = 3',5'-cyclic GMP + diphosphate. With respect to regulation, activated by nitric oxide in the presence of magnesium or manganese ions. Has guanylyl cyclase on binding to the beta-1 subunit. The sequence is that of Guanylate cyclase soluble subunit alpha-2 (Gucy1a2) from Rattus norvegicus (Rat).